The sequence spans 2094 residues: Non-reducing polyketide synthase ustP (2094 aa).

Residues valine 9 to histidine 243 form an N-terminal acylcarrier protein transacylase (SAT) domain region. Residues asparagine 357–proline 377 form a disordered region. In terms of domain architecture, Ketosynthase family 3 (KS3) spans arginine 379–aspartate 813. Active-site for beta-ketoacyl synthase activity residues include cysteine 551, histidine 686, and histidine 727. Residues phenylalanine 914–alanine 1227 are malonyl-CoA:ACP transacylase (MAT) domain. Catalysis depends on serine 1004, which acts as the For acyl/malonyl transferase activity. The interval threonine 1305–proline 1629 is product template (PT) domain. Residues valine 1308–arginine 1445 are N-terminal hotdog fold. One can recognise a PKS/mFAS DH domain in the interval valine 1308 to aspartate 1625. Catalysis depends on histidine 1341, which acts as the Proton acceptor; for dehydratase activity. Residues glycine 1473–aspartate 1625 are C-terminal hotdog fold. The active-site Proton donor; for dehydratase activity is the aspartate 1536. The span at alanine 1644 to glutamine 1671 shows a compositional bias: low complexity. The segment at alanine 1644–aspartate 1689 is disordered. In terms of domain architecture, Carrier spans aspartate 1689–serine 1763. O-(pantetheine 4'-phosphoryl)serine is present on serine 1723. Residues serine 1762–proline 1778 show a composition bias toward polar residues. The tract at residues serine 1762–proline 1782 is disordered. The claisen cyclase domain stretch occupies residues lysine 1844–serine 2069. The active-site For Claisen cyclase activity is the serine 1916.

The catalysed reaction is 6 malonyl-CoA + acetyl-CoA + 6 H(+) = naphtopyrone YWA1 + 6 CO2 + 7 CoA + H2O. The protein operates within secondary metabolite biosynthesis. Its function is as follows. Non-reducing polyketide synthase; part of the gene cluster that mediates the biosynthesis of ustilaginoidins, dimeric gamma-naphthopyrones isolated from different fungal species. The first step in the biosynthesis of ustilaginoidins is the production of gamma-naphthopyrone precursor YWA1 by the non-reducing polyketide synthase ustP, via condensation of one acetyl-CoA starter unit with 6 malonyl-CoA units. YWA1 is then probably substrate of the ustZ to yield norrubrofusarin via a dehydration reaction. A key enzyme in the biosynthetic pathway is the laccase ustL, which catalyzes the oxidative dimerization of norrubrofusarin to ustilaginoidin A. It can produce the M- and P-atropisomers in varying amounts, depending on the reaction conditions. For the biosynthesis of 3-methylustilaginoid in derivatives such as chaetochromin A, a methylated derivative of YWA1 is required. The C-methylation is considered to be catalyzed by ustM, the phosphopantetheine attachment site of which indicates that it acts on the growing polyketide chain before release of the product. For the biosynthesis of chaetochromin A, it is assumed that saturation of the D2 double bond takes place before dimerization, and is probably catalyzed by an external reductase because no candidate gene was identified within the cluster. The chain is Non-reducing polyketide synthase ustP from Ustilaginoidea virens (Rice false smut fungus).